Reading from the N-terminus, the 248-residue chain is Pyridoxine 5'-phosphate synthase (248 aa).

Residue Asn-12 coordinates 3-amino-2-oxopropyl phosphate. 1-deoxy-D-xylulose 5-phosphate is bound at residue Asp-14–His-15. Residue Arg-23 participates in 3-amino-2-oxopropyl phosphate binding. His-48 acts as the Proton acceptor in catalysis. 2 residues coordinate 1-deoxy-D-xylulose 5-phosphate: Arg-50 and His-55. Residue Glu-75 is the Proton acceptor of the active site. Residue Thr-105 coordinates 1-deoxy-D-xylulose 5-phosphate. His-196 (proton donor) is an active-site residue. Residues Gly-197 and Gly-218–His-219 contribute to the 3-amino-2-oxopropyl phosphate site.

It belongs to the PNP synthase family. In terms of assembly, homooctamer; tetramer of dimers.

Its subcellular location is the cytoplasm. The enzyme catalyses 3-amino-2-oxopropyl phosphate + 1-deoxy-D-xylulose 5-phosphate = pyridoxine 5'-phosphate + phosphate + 2 H2O + H(+). It functions in the pathway cofactor biosynthesis; pyridoxine 5'-phosphate biosynthesis; pyridoxine 5'-phosphate from D-erythrose 4-phosphate: step 5/5. Catalyzes the complicated ring closure reaction between the two acyclic compounds 1-deoxy-D-xylulose-5-phosphate (DXP) and 3-amino-2-oxopropyl phosphate (1-amino-acetone-3-phosphate or AAP) to form pyridoxine 5'-phosphate (PNP) and inorganic phosphate. This Pseudomonas paraeruginosa (strain DSM 24068 / PA7) (Pseudomonas aeruginosa (strain PA7)) protein is Pyridoxine 5'-phosphate synthase.